The following is a 339-amino-acid chain: Uroporphyrinogen decarboxylase (339 aa).

Substrate is bound by residues arginine 23–arginine 27, aspartate 72, tyrosine 147, serine 202, and histidine 315.

This sequence belongs to the uroporphyrinogen decarboxylase family. As to quaternary structure, homodimer.

It localises to the cytoplasm. It catalyses the reaction uroporphyrinogen III + 4 H(+) = coproporphyrinogen III + 4 CO2. Its pathway is porphyrin-containing compound metabolism; protoporphyrin-IX biosynthesis; coproporphyrinogen-III from 5-aminolevulinate: step 4/4. Its function is as follows. Catalyzes the decarboxylation of four acetate groups of uroporphyrinogen-III to yield coproporphyrinogen-III. In Desulfotalea psychrophila (strain LSv54 / DSM 12343), this protein is Uroporphyrinogen decarboxylase.